Reading from the N-terminus, the 142-residue chain is Ribosome maturation factor RimP (142 aa).

The protein belongs to the RimP family.

It localises to the cytoplasm. Required for maturation of 30S ribosomal subunits. This chain is Ribosome maturation factor RimP, found in Wolinella succinogenes (strain ATCC 29543 / DSM 1740 / CCUG 13145 / JCM 31913 / LMG 7466 / NCTC 11488 / FDC 602W) (Vibrio succinogenes).